Consider the following 226-residue polypeptide: ATP synthase F(0) complex subunit a (226 aa).

The next 6 membrane-spanning stretches (helical) occupy residues 5–25 (LFASFIAPTILGLPAAVLIIL), 68–88 (WSLMLMWLIIFIATTNLLGLL), 97–117 (QLSMNLAMAIPLWAGAVTTGF), 138–158 (IPMLVIIETISLFIQPMALAV), 160–180 (LTANITAGHLLMHLIGSATLA), and 189–209 (TLIIFTVLILLTMLEIAVALI).

It belongs to the ATPase A chain family. In terms of assembly, component of the ATP synthase complex composed at least of ATP5F1A/subunit alpha, ATP5F1B/subunit beta, ATP5MC1/subunit c (homooctomer), MT-ATP6/subunit a, MT-ATP8/subunit 8, ATP5ME/subunit e, ATP5MF/subunit f, ATP5MG/subunit g, ATP5MK/subunit k, ATP5MJ/subunit j, ATP5F1C/subunit gamma, ATP5F1D/subunit delta, ATP5F1E/subunit epsilon, ATP5PF/subunit F6, ATP5PB/subunit b, ATP5PD/subunit d, ATP5PO/subunit OSCP. ATP synthase complex consists of a soluble F(1) head domain (subunits alpha(3) and beta(3)) - the catalytic core - and a membrane F(0) domain - the membrane proton channel (subunits c, a, 8, e, f, g, k and j). These two domains are linked by a central stalk (subunits gamma, delta, and epsilon) rotating inside the F1 region and a stationary peripheral stalk (subunits F6, b, d, and OSCP). Interacts with DNAJC30; interaction is direct.

The protein localises to the mitochondrion inner membrane. The catalysed reaction is H(+)(in) = H(+)(out). Its function is as follows. Subunit a, of the mitochondrial membrane ATP synthase complex (F(1)F(0) ATP synthase or Complex V) that produces ATP from ADP in the presence of a proton gradient across the membrane which is generated by electron transport complexes of the respiratory chain. ATP synthase complex consist of a soluble F(1) head domain - the catalytic core - and a membrane F(1) domain - the membrane proton channel. These two domains are linked by a central stalk rotating inside the F(1) region and a stationary peripheral stalk. During catalysis, ATP synthesis in the catalytic domain of F(1) is coupled via a rotary mechanism of the central stalk subunits to proton translocation. With the subunit c (ATP5MC1), forms the proton-conducting channel in the F(0) domain, that contains two crucial half-channels (inlet and outlet) that facilitate proton movement from the mitochondrial intermembrane space (IMS) into the matrix. Protons are taken up via the inlet half-channel and released through the outlet half-channel, following a Grotthuss mechanism. This Gorilla gorilla gorilla (Western lowland gorilla) protein is ATP synthase F(0) complex subunit a.